Consider the following 297-residue polypeptide: N-acetylneuraminate lyase (297 aa).

2 residues coordinate aceneuramate: serine 47 and threonine 48. Tyrosine 137 acts as the Proton donor in catalysis. Catalysis depends on lysine 165, which acts as the Schiff-base intermediate with substrate. Aceneuramate-binding residues include threonine 167, glycine 189, aspartate 191, glutamate 192, and serine 208.

Belongs to the DapA family. NanA subfamily. In terms of assembly, homotetramer.

The protein localises to the cytoplasm. It carries out the reaction aceneuramate = aldehydo-N-acetyl-D-mannosamine + pyruvate. It functions in the pathway amino-sugar metabolism; N-acetylneuraminate degradation; D-fructose 6-phosphate from N-acetylneuraminate: step 1/5. In terms of biological role, catalyzes the reversible aldol cleavage of N-acetylneuraminic acid (sialic acid; Neu5Ac) to form pyruvate and N-acetylmannosamine (ManNAc) via a Schiff base intermediate. This Salmonella typhimurium (strain LT2 / SGSC1412 / ATCC 700720) protein is N-acetylneuraminate lyase.